The primary structure comprises 338 residues: Fructose-1,6-bisphosphatase 1 (338 aa).

An N-acetylalanine modification is found at A2. AMP is bound by residues 18–22 (VMEEG) and 28–32 (TGELT). Residues D69 and E98 each coordinate Mg(2+). 113 to 114 (KY) lines the AMP pocket. 3 residues coordinate Mg(2+): D119, L121, and D122. 122–125 (DGSS) provides a ligand contact to substrate. R141 lines the AMP pocket. K151 bears the N6-succinyllysine mark. Substrate-binding positions include 213 to 216 (NEGY), 244 to 249 (RYVGSM), Y265, and 275 to 277 (KLR). Phosphotyrosine occurs at positions 216, 245, and 265. E281 is a binding site for Mg(2+).

Belongs to the FBPase class 1 family. In terms of assembly, homotetramer. It depends on Mg(2+) as a cofactor. Expressed in pancreatic islets.

It catalyses the reaction beta-D-fructose 1,6-bisphosphate + H2O = beta-D-fructose 6-phosphate + phosphate. The protein operates within carbohydrate biosynthesis; gluconeogenesis. With respect to regulation, subject to complex allosteric regulation. The enzyme can assume an active R-state, or an inactive T-state. Intermediate conformations may exist. AMP acts as an allosteric inhibitor. AMP binding affects the turnover of bound substrate and not the affinity for substrate. Fructose 2,6-bisphosphate acts as a competitive inhibitor. Fructose 2,6-bisphosphate and AMP have synergistic effects. Its function is as follows. Catalyzes the hydrolysis of fructose 1,6-bisphosphate to fructose 6-phosphate in the presence of divalent cations, acting as a rate-limiting enzyme in gluconeogenesis. Plays a role in regulating glucose sensing and insulin secretion of pancreatic beta-cells. Appears to modulate glycerol gluconeogenesis in liver. Important regulator of appetite and adiposity; increased expression of the protein in liver after nutrient excess increases circulating satiety hormones and reduces appetite-stimulating neuropeptides and thus seems to provide a feedback mechanism to limit weight gain. The chain is Fructose-1,6-bisphosphatase 1 (FBP1) from Homo sapiens (Human).